The chain runs to 598 residues: Nuclear receptor subfamily 4 group A member 2 (598 aa).

The disordered stretch occupies residues 1-22 (MPCVQAQYGSSPQGASPASQSY). Positions 8–22 (YGSSPQGASPASQSY) are enriched in low complexity. Positions 260-335 (EGLCAVCGDN…VGMVKEVVRT (76 aa)) form a DNA-binding region, nuclear receptor. 2 NR C4-type zinc fingers span residues 263–283 (CAVCGDNAACQHYGVRTCEGC) and 299–323 (CLANKNCPVDKRRRNRCQYCRFQKC). The Bipartite nuclear localization signal (NLS1) motif lies at 287-314 (FKRTVQKNAKYVCLANKNCPVDKRRRNR). The segment at 337-361 (SLKGRRGRLPSKPKSPQDPSPPSPP) is disordered. The Nuclear localization signal (NLS1) signature appears at 338 to 350 (LKGRRGRLPSKPK). A compositionally biased stretch (pro residues) spans 352-361 (PQDPSPPSPP). Positions 360 to 595 (PPVSLISALV…AIIDKLFLDT (236 aa)) constitute an NR LBD domain. The nuclear export sequence (NES1) signature appears at 443–452 (FLELFVLRLA). The nuclear export sequence (NES2) motif lies at 568–577 (QGLQRIFYLK).

It belongs to the nuclear hormone receptor family. NR4 subfamily. As to quaternary structure, interacts with SFPQ, NCOR2, SIN3A and HADC1. The interaction with NCOR2 increases in the absence of PITX3. Interacts with PER2. In terms of tissue distribution, brain.

Its subcellular location is the cytoplasm. The protein resides in the nucleus. Its function is as follows. Transcriptional regulator which is important for the differentiation and maintenance of meso-diencephalic dopaminergic (mdDA) neurons during development. It is crucial for expression of a set of genes such as SLC6A3, SLC18A2, TH and DRD2 which are essential for development of mdDA neurons. This Mus musculus (Mouse) protein is Nuclear receptor subfamily 4 group A member 2 (Nr4a2).